Consider the following 106-residue polypeptide: Iron-sulfur cluster assembly protein CyaY (106 aa).

Belongs to the frataxin family. In terms of assembly, interacts with IscS. Certain pairs of proteins can bind simultaneously to IscS; IscS-IscU-CyaY complexes can be isolated in vitro, but (IscS-TusA-CyaY) complexes cannot.

Involved in iron-sulfur (Fe-S) cluster assembly. May act as a regulator of Fe-S biogenesis. The chain is Iron-sulfur cluster assembly protein CyaY from Escherichia coli O157:H7.